Reading from the N-terminus, the 101-residue chain is Large ribosomal subunit protein uL23 (101 aa).

It belongs to the universal ribosomal protein uL23 family. As to quaternary structure, part of the 50S ribosomal subunit. Contacts protein L29, and trigger factor when it is bound to the ribosome.

In terms of biological role, one of the early assembly proteins it binds 23S rRNA. One of the proteins that surrounds the polypeptide exit tunnel on the outside of the ribosome. Forms the main docking site for trigger factor binding to the ribosome. This Leptospira biflexa serovar Patoc (strain Patoc 1 / Ames) protein is Large ribosomal subunit protein uL23.